A 224-amino-acid chain; its full sequence is Steroid receptor RNA activator 1 (224 aa).

Disordered regions lie at residues 1 to 90 (MAEL…EPTS) and 201 to 224 (AANEEKSAATAEKNHTIPGFQQAS). Ser48, Ser57, and Ser75 each carry phosphoserine. Pro residues predominate over residues 58–76 (PGPPPMGPPPPSSKAPRSP). The segment covering 201–215 (AANEEKSAATAEKNH) has biased composition (basic and acidic residues).

Belongs to the SRA1 family. As to quaternary structure, SRA1 RNA exists in a ribonucleoprotein complex containing NCOA1. The RNA also forms a complex with PUS1 and RARG in the nucleus. Interacts with AR. Highly expressed in liver and skeletal muscle and to a lesser extent in brain. Also expressed in both normal and tumorigenic breast epithelial cell lines. Significantly up-regulated in human tumors of the breast, ovary, and uterus.

Its subcellular location is the nucleus. The protein localises to the cytoplasm. In terms of biological role, functional RNA which acts as a transcriptional coactivator that selectively enhances steroid receptor-mediated transactivation ligand-independently through a mechanism involving the modulating N-terminal domain (AF-1) of steroid receptors. Also mediates transcriptional coactivation of steroid receptors ligand-dependently through the steroid-binding domain (AF-2). Enhances cellular proliferation and differentiation and promotes apoptosis in vivo. May play a role in tumorigenesis. The protein is Steroid receptor RNA activator 1 of Homo sapiens (Human).